We begin with the raw amino-acid sequence, 418 residues long: Acyl-[acyl-carrier-protein] desaturase 4, chloroplastic (418 aa).

A chloroplast-targeting transit peptide spans 1 to 70 (MASSGLAVAA…ATAAAPADTA (70 aa)). Fe cation-binding residues include Glu-152, Glu-190, His-193, Glu-243, Glu-276, and His-279.

This sequence belongs to the fatty acid desaturase type 2 family. Homodimer. Requires Fe(2+) as cofactor.

Its subcellular location is the plastid. It localises to the chloroplast. It functions in the pathway lipid metabolism; fatty acid metabolism. Introduces a cis double bond in the acyl chain of an acyl-[acyl-carrier protein]. The sequence is that of Acyl-[acyl-carrier-protein] desaturase 4, chloroplastic from Oryza sativa subsp. japonica (Rice).